A 248-amino-acid chain; its full sequence is 5'-nucleotidase SurE (248 aa).

Positions 8, 9, 39, and 91 each coordinate a divalent metal cation.

Belongs to the SurE nucleotidase family. A divalent metal cation serves as cofactor.

The protein localises to the cytoplasm. The catalysed reaction is a ribonucleoside 5'-phosphate + H2O = a ribonucleoside + phosphate. Nucleotidase that shows phosphatase activity on nucleoside 5'-monophosphates. In Neisseria meningitidis serogroup A / serotype 4A (strain DSM 15465 / Z2491), this protein is 5'-nucleotidase SurE.